The primary structure comprises 417 residues: Pre-mRNA-splicing factor PRP46 (417 aa).

WD repeat units lie at residues 119–159 (AHQG…LKAT), 162–201 (GHIM…SSSG), 209–248 (GHVG…EIMV), 251–290 (GHRS…TQLA), 293–334 (HHSK…NEFG), 337–376 (GENK…LLQS), and 385–417 (STES…WGEE).

This sequence belongs to the WD repeat PRL1/PRL2 family. As to quaternary structure, associated with the spliceosome.

Its subcellular location is the cytoplasm. It is found in the nucleus. Functionally, involved in pre-mRNA splicing and required for cell cycle progression at G2/M. This Debaryomyces hansenii (strain ATCC 36239 / CBS 767 / BCRC 21394 / JCM 1990 / NBRC 0083 / IGC 2968) (Yeast) protein is Pre-mRNA-splicing factor PRP46 (PRP46).